A 1107-amino-acid chain; its full sequence is Rho GTPase-activating protein 39 (1107 aa).

The disordered stretch occupies residues 1–21 (MSQAQDYECRSHHVDEQEPRI). The residue at position 2 (S2) is an N-acetylserine. A compositionally biased stretch (basic and acidic residues) spans 7–19 (YECRSHHVDEQEP). 2 WW domains span residues 25–58 (STRL…PPAG) and 63–97 (RTSE…RPQN). A compositionally biased stretch (polar residues) spans 111–122 (QNTESPRASADN). 4 disordered regions span residues 111-173 (QNTE…PPGV), 218-267 (PSFL…PERR), 282-311 (SPLL…LYEE), and 326-370 (MDVQ…LMRT). The span at 123-136 (SPGRGSRDGSTGSS) shows a compositional bias: low complexity. Positions 242–254 (SGSQHSPNLQTFV) are enriched in polar residues. S282 is subject to Phosphoserine. Polar residues-rich tracts occupy residues 331-343 (EANS…SPQR) and 353-369 (LQTT…QLMR). S380, S384, S402, and S403 each carry phosphoserine. 3 disordered regions span residues 404 to 429 (PKLR…QPSP), 441 to 529 (SGDY…RASL), and 563 to 585 (MKQR…GAVP). Over residues 470–484 (SWSSQQDTMSSTGYS) the composition is skewed to polar residues. S597, S683, S708, and S719 each carry phosphoserine. In terms of domain architecture, MyTH4 spans 715–867 (WSSESIKKPM…PYVEEPDGVA (153 aa)). The 189-residue stretch at 914-1102 (SALQEVMSMQ…VLIQHLDTSF (189 aa)) folds into the Rho-GAP domain.

It is found in the nucleus. The polypeptide is Rho GTPase-activating protein 39 (Arhgap39) (Mus musculus (Mouse)).